Here is a 90-residue protein sequence, read N- to C-terminus: Small ribosomal subunit protein bS16 (90 aa).

It belongs to the bacterial ribosomal protein bS16 family.

The sequence is that of Small ribosomal subunit protein bS16 from Lactobacillus helveticus (strain DPC 4571).